Reading from the N-terminus, the 132-residue chain is Agouti-signaling protein (132 aa).

The signal sequence occupies residues 1–22; the sequence is MDVTRLLLATLLVFLCFFTVYS. N39 carries N-linked (GlcNAc...) asparagine glycosylation. Positions 61 to 87 are disordered; sequence HISRKEAEKKRSSKKEASMKKVARPRT. Residues 64-79 are compositionally biased toward basic and acidic residues; that stretch reads RKEAEKKRSSKKEASM. Intrachain disulfides connect C93/C108, C100/C114, C107/C125, C111/C132, and C116/C123. In terms of domain architecture, Agouti spans 93 to 132; sequence CVATRDSCKPPAPACCDPCASCQCRFFRSACSCRVLSLNC.

The protein resides in the secreted. Involved in the regulation of melanogenesis. The binding of ASP to MC1R precludes alpha-MSH initiated signaling and thus blocks production of cAMP, leading to a down-regulation of eumelanogenesis (brown/black pigment) and thus increasing synthesis of pheomelanin (yellow/red pigment). The protein is Agouti-signaling protein (ASIP) of Colobus polykomos (Western black-and-white colobus monkey).